Consider the following 449-residue polypeptide: Adenylosuccinate synthetase isozyme 1 B (449 aa).

GTP is bound by residues 34-40 (GDEGKGK) and 62-64 (GHT). The active-site Proton acceptor is Asp-35. Positions 35 and 62 each coordinate Mg(2+). Substrate is bound at residue Asp-35. IMP contacts are provided by residues 35–38 (DEGK), 60–63 (NAGH), Thr-155, Arg-169, Asn-248, Thr-263, and Arg-327. His-63 (proton donor) is an active-site residue. 323-329 (VTTGRKR) is a binding site for substrate. GTP is bound by residues Arg-329, 355-357 (KLD), and 437-440 (GVGK).

The protein belongs to the adenylosuccinate synthetase family. As to quaternary structure, homodimer. It depends on Mg(2+) as a cofactor.

The protein resides in the cytoplasm. The enzyme catalyses IMP + L-aspartate + GTP = N(6)-(1,2-dicarboxyethyl)-AMP + GDP + phosphate + 2 H(+). It participates in purine metabolism; AMP biosynthesis via de novo pathway; AMP from IMP: step 1/2. Functionally, component of the purine nucleotide cycle (PNC), which interconverts IMP and AMP to regulate the nucleotide levels in various tissues, and which contributes to glycolysis and ammoniagenesis. Catalyzes the first committed step in the biosynthesis of AMP from IMP. This chain is Adenylosuccinate synthetase isozyme 1 B (adss1b), found in Salmo salar (Atlantic salmon).